Reading from the N-terminus, the 277-residue chain is 2,3,4,5-tetrahydropyridine-2,6-dicarboxylate N-succinyltransferase (277 aa).

Arg106 and Asp143 together coordinate substrate.

The protein belongs to the transferase hexapeptide repeat family. In terms of assembly, homotrimer.

It is found in the cytoplasm. The catalysed reaction is (S)-2,3,4,5-tetrahydrodipicolinate + succinyl-CoA + H2O = (S)-2-succinylamino-6-oxoheptanedioate + CoA. It participates in amino-acid biosynthesis; L-lysine biosynthesis via DAP pathway; LL-2,6-diaminopimelate from (S)-tetrahydrodipicolinate (succinylase route): step 1/3. The chain is 2,3,4,5-tetrahydropyridine-2,6-dicarboxylate N-succinyltransferase from Xylella fastidiosa (strain 9a5c).